A 123-amino-acid chain; its full sequence is Immunoglobulin lambda variable 9-49 (123 aa).

An N-terminal signal peptide occupies residues 1 to 19 (MAWAPLLLTLLSLLTGSLS). A framework-1 region spans residues 20–44 (QPVLTQPPSASASLGASVTLTCTLS). One can recognise an Ig-like domain in the interval 21–123 (PVLTQPPSAS…ADHGSGSNFV (103 aa)). Cysteines 41 and 112 form a disulfide. Residues 45–51 (SGYSNYK) are complementarity-determining-1. The interval 52-68 (VDWYQQRPGKGPRFVMR) is framework-2. The segment at 69 to 76 (VGTGGIVG) is complementarity-determining-2. A framework-3 region spans residues 77-112 (SKGDGIPDRFSVLGSGLNRYLTIKNIQEEDESDYHC). The residue at position 96 (Tyr96) is a Phosphotyrosine. At Thr98 the chain carries Phosphothreonine. Positions 113–123 (GADHGSGSNFV) are complementarity-determining-3.

In terms of assembly, immunoglobulins are composed of two identical heavy chains and two identical light chains; disulfide-linked.

The protein localises to the secreted. The protein resides in the cell membrane. Its function is as follows. V region of the variable domain of immunoglobulin light chains that participates in the antigen recognition. Immunoglobulins, also known as antibodies, are membrane-bound or secreted glycoproteins produced by B lymphocytes. In the recognition phase of humoral immunity, the membrane-bound immunoglobulins serve as receptors which, upon binding of a specific antigen, trigger the clonal expansion and differentiation of B lymphocytes into immunoglobulins-secreting plasma cells. Secreted immunoglobulins mediate the effector phase of humoral immunity, which results in the elimination of bound antigens. The antigen binding site is formed by the variable domain of one heavy chain, together with that of its associated light chain. Thus, each immunoglobulin has two antigen binding sites with remarkable affinity for a particular antigen. The variable domains are assembled by a process called V-(D)-J rearrangement and can then be subjected to somatic hypermutations which, after exposure to antigen and selection, allow affinity maturation for a particular antigen. This is Immunoglobulin lambda variable 9-49 from Homo sapiens (Human).